Consider the following 66-residue polypeptide: Phylloseptin-Az3 (66 aa).

The signal sequence occupies residues 1–22 (MAFLKKSLFLVLFLGLVSLSIC). The propeptide occupies 23-44 (EEEKRETEEEEYNQEDDDKSEE). The residue at position 65 (phenylalanine 65) is a Phenylalanine amide.

Expressed by the skin glands.

Its subcellular location is the secreted. Has antimicrobial activity. This Pithecopus azureus (Orange-legged monkey tree frog) protein is Phylloseptin-Az3.